Reading from the N-terminus, the 148-residue chain is MVRFLLLNGPNLNRLGMREPHIYGHTTLAQLEKQLTEFASEYAVELTCYQSNYEGALIDQIHRAESLYDGIIFNPGAFTHYSYALRDAIASIQTPVIEVHISNIHAREPFRHQSVLAPVTAGQIVGLGVNGYRLAILALLDMVEGKGK.

The active-site Proton acceptor is the Y23. Residues N74, H80, and D87 each contribute to the substrate site. H100 (proton donor) is an active-site residue. Substrate is bound by residues 101 to 102 (IS) and R111.

It belongs to the type-II 3-dehydroquinase family. In terms of assembly, homododecamer.

It carries out the reaction 3-dehydroquinate = 3-dehydroshikimate + H2O. The protein operates within metabolic intermediate biosynthesis; chorismate biosynthesis; chorismate from D-erythrose 4-phosphate and phosphoenolpyruvate: step 3/7. Functionally, catalyzes a trans-dehydration via an enolate intermediate. In Anoxybacillus flavithermus (strain DSM 21510 / WK1), this protein is 3-dehydroquinate dehydratase.